We begin with the raw amino-acid sequence, 814 residues long: ATP-dependent RNA helicase dbp-7 (814 aa).

Positions 26–102 (GGRWRDRVKA…PPPPPTHAMK (77 aa)) are disordered. 2 stretches are compositionally biased toward basic and acidic residues: residues 28–42 (RWRDRVKAQKGEKGG) and 69–78 (QRTEDGDSGR). The Q motif signature appears at 145–174 (ENFLSLGLSRRVSQHLATKLEMKAPTAIQK). In terms of domain architecture, Helicase ATP-binding spans 178 to 384 (PQLVKEDSDA…EISLEDAVHI (207 aa)). 191-198 (AETGSGKT) is an ATP binding site. The DEAD box motif lies at 313–316 (DEGD). A Helicase C-terminal domain is found at 422 to 622 (RLVTLIALLK…GFATNINVPG (201 aa)). Disordered regions lie at residues 464–483 (TPRAEPEPKPEGEAPTKPNI), 662–695 (ESKSEKFAASKQGKKGKKDAKKDENKTPDNPLLV), and 741–795 (GIGG…AGRR). Residues 467-477 (AEPEPKPEGEA) show a composition bias toward basic and acidic residues. The segment covering 779-790 (DDDERDFGAADE) has biased composition (acidic residues).

It belongs to the DEAD box helicase family. DDX31/DBP7 subfamily.

The protein localises to the nucleus. Its subcellular location is the nucleolus. The enzyme catalyses ATP + H2O = ADP + phosphate + H(+). ATP-binding RNA helicase involved in the biogenesis of 60S ribosomal subunits and is required for the normal formation of 25S and 5.8S rRNAs. This is ATP-dependent RNA helicase dbp-7 (dbp-7) from Neurospora crassa (strain ATCC 24698 / 74-OR23-1A / CBS 708.71 / DSM 1257 / FGSC 987).